We begin with the raw amino-acid sequence, 638 residues long: Phosphomethylpyrimidine synthase (638 aa).

Residues asparagine 243, methionine 272, tyrosine 301, histidine 337, 357-359 (SRG), 398-401 (DGLR), and glutamate 437 contribute to the substrate site. Histidine 441 is a Zn(2+) binding site. Substrate is bound at residue tyrosine 464. Position 505 (histidine 505) interacts with Zn(2+). Positions 585, 588, and 593 each coordinate [4Fe-4S] cluster.

This sequence belongs to the ThiC family. Homodimer. [4Fe-4S] cluster is required as a cofactor.

It carries out the reaction 5-amino-1-(5-phospho-beta-D-ribosyl)imidazole + S-adenosyl-L-methionine = 4-amino-2-methyl-5-(phosphooxymethyl)pyrimidine + CO + 5'-deoxyadenosine + formate + L-methionine + 3 H(+). The protein operates within cofactor biosynthesis; thiamine diphosphate biosynthesis. Its function is as follows. Catalyzes the synthesis of the hydroxymethylpyrimidine phosphate (HMP-P) moiety of thiamine from aminoimidazole ribotide (AIR) in a radical S-adenosyl-L-methionine (SAM)-dependent reaction. In Azoarcus sp. (strain BH72), this protein is Phosphomethylpyrimidine synthase.